We begin with the raw amino-acid sequence, 354 residues long: Carbamoyl phosphate synthase arginine-specific small chain (354 aa).

Residues 1 to 163 (MKAYLHVASG…RTIETYGEGG (163 aa)) are CPSase. Positions 46, 213, and 215 each coordinate L-glutamine. Positions 165–352 (HLVLVDFGYK…LQTVFKGENV (188 aa)) constitute a Glutamine amidotransferase type-1 domain. The active-site Nucleophile is the Cys240. Residues Leu241, Gln244, Asn282, and Tyr285 each coordinate L-glutamine. Residues His325 and Glu327 contribute to the active site.

The protein belongs to the CarA family. As to quaternary structure, composed of two chains; the small (or glutamine) chain promotes the hydrolysis of glutamine to ammonia, which is used by the large (or ammonia) chain to synthesize carbamoyl phosphate. Tetramer of heterodimers (alpha,beta)4.

It catalyses the reaction hydrogencarbonate + L-glutamine + 2 ATP + H2O = carbamoyl phosphate + L-glutamate + 2 ADP + phosphate + 2 H(+). The enzyme catalyses L-glutamine + H2O = L-glutamate + NH4(+). It functions in the pathway amino-acid biosynthesis; L-arginine biosynthesis; carbamoyl phosphate from bicarbonate: step 1/1. Functionally, small subunit of the glutamine-dependent carbamoyl phosphate synthetase (CPSase). CPSase catalyzes the formation of carbamoyl phosphate from the ammonia moiety of glutamine, carbonate, and phosphate donated by ATP, constituting the first step of the biosynthetic pathway leading to arginine and/or urea. The small subunit (glutamine amidotransferase) binds and cleaves glutamine to supply the large subunit with the substrate ammonia. This Geobacillus stearothermophilus (Bacillus stearothermophilus) protein is Carbamoyl phosphate synthase arginine-specific small chain.